Reading from the N-terminus, the 412-residue chain is Tyrosine--tRNA ligase 1 (412 aa).

Y41 serves as a coordination point for L-tyrosine. A 'HIGH' region motif is present at residues 46–55; it reads ATADSLHVGH. Positions 174 and 178 each coordinate L-tyrosine. The 'KMSKS' region signature appears at 234–238; sequence KMGKS. An ATP-binding site is contributed by K237. An S4 RNA-binding domain is found at 348 to 411; it reads LSLTDLLLEH…KKQHLHLRLE (64 aa).

Belongs to the class-I aminoacyl-tRNA synthetase family. TyrS type 1 subfamily. As to quaternary structure, homodimer.

The protein localises to the cytoplasm. The enzyme catalyses tRNA(Tyr) + L-tyrosine + ATP = L-tyrosyl-tRNA(Tyr) + AMP + diphosphate + H(+). Functionally, catalyzes the attachment of tyrosine to tRNA(Tyr) in a two-step reaction: tyrosine is first activated by ATP to form Tyr-AMP and then transferred to the acceptor end of tRNA(Tyr). The protein is Tyrosine--tRNA ligase 1 of Pseudomonas aeruginosa (strain ATCC 15692 / DSM 22644 / CIP 104116 / JCM 14847 / LMG 12228 / 1C / PRS 101 / PAO1).